We begin with the raw amino-acid sequence, 354 residues long: Guanine nucleotide-binding protein G(i) subunit alpha-1 (354 aa).

G2 is lipidated: N-myristoyl glycine. C3 carries S-palmitoyl cysteine lipidation. One can recognise a G-alpha domain in the interval 32-354 (REVKLLLLGA…KNNLKDCGLF (323 aa)). The segment at 35 to 48 (KLLLLGAGESGKST) is G1 motif. GTP-binding positions include 43 to 48 (ESGKST), 150 to 151 (DS), and 175 to 178 (LRTR). S47 is a binding site for Mg(2+). Positions 173–181 (DVLRTRVKT) are G2 motif. A Mg(2+)-binding site is contributed by T181. The tract at residues 196–205 (FKMFDVGGQR) is G3 motif. GTP is bound by residues 200 to 204 (DVGGQ), 269 to 272 (NKKD), and A326. The segment at 265-272 (ILFLNKKD) is G4 motif. The tract at residues 324 to 329 (TCATDT) is G5 motif.

This sequence belongs to the G-alpha family. G(i/o/t/z) subfamily. In terms of assembly, heterotrimeric G proteins are composed of 3 units; alpha, beta and gamma. The alpha chain contains the guanine nucleotide binding site. Part of a spindle orientation complex at least composed of GNAI1, GPSM2 and NUMA1. Identified in complex with the beta subunit GNB1 and the gamma subunit GNG1. Identified in complex with the beta subunit GNB1 and the gamma subunit GNG2. Component of the TAS2R14-GNAI1 complex, consisting of TAS2R14, GNAI1, GNB1 and GNG2; within the complex interacts with TAS2R14; this complex plays a role in the perception of bitterness. GTP binding causes dissociation of the heterotrimer, liberating the individual subunits so that they can interact with downstream effector proteins. Interacts (GDP-bound form) with GPSM1; this inhibits guanine nucleotide exchange and GTP binding. Interacts (GDP-bound form) with GPSM2 (via GoLoco domains); this inhibits guanine nucleotide exchange. Interacts with RGS10; this strongly enhances GTP hydrolysis. Interacts with RGS1 and RGS16; this strongly enhances GTPase activity. Interacts with RGS4. Interacts with RGS12. Interacts (via active GTP- or inactive GDP-bound forms) with RGS14 (via RGS and GoLoco domains). Interacts with RGS3, RGS6, RGS7, RGS8, RGS17, RGS18 and RGS20 (in vitro). Interacts (GDP-bound form) with RIC8A (via C-terminus); promoting GNAI1 folding and association with the plasma membrane. Interacts (inactive GDP-bound form) with NUCB1 (via GBA motif); the interaction leads to activation of GNAI1. Interacts (inactive GDP-bound form) with CCDC88C/DAPLE (via GBA motif); the interaction leads to activation of GNAI1. Interacts (inactive GDP-bound form) with CCDC8A/GIV (via GBA motif). Post-translationally, myristoylation at Gly-2 is required for membrane anchoring before palmitoylation. Palmitoylation at Cys-3 varies with membrane lipid composition.

It is found in the nucleus. The protein localises to the cytoplasm. Its subcellular location is the cell membrane. It localises to the cytoskeleton. The protein resides in the microtubule organizing center. It is found in the centrosome. The protein localises to the cell cortex. Its subcellular location is the membrane. It catalyses the reaction GTP + H2O = GDP + phosphate + H(+). Guanine nucleotide-binding proteins (G proteins) function as transducers downstream of G protein-coupled receptors (GPCRs) in numerous signaling cascades. The alpha chain contains the guanine nucleotide binding site and alternates between an active, GTP-bound state and an inactive, GDP-bound state. Signaling by an activated GPCR promotes GDP release and GTP binding. The alpha subunit has a low GTPase activity that converts bound GTP to GDP, thereby terminating the signal. Both GDP release and GTP hydrolysis are modulated by numerous regulatory proteins. Signaling is mediated via effector proteins, such as adenylate cyclase. Inhibits adenylate cyclase activity of ADCY1, ADCY5 and ADCY6, leading to decreased intracellular cAMP levels. The inactive GDP-bound form prevents the association of RGS14 with centrosomes and is required for the translocation of RGS14 from the cytoplasm to the plasma membrane. Required for normal cytokinesis during mitosis. Required for cortical dynein-dynactin complex recruitment during metaphase. The polypeptide is Guanine nucleotide-binding protein G(i) subunit alpha-1 (GNAI1) (Bos taurus (Bovine)).